The chain runs to 305 residues: Insulin-like peptide (305 aa).

Positions 1-22 (MNLSSVYVLASLAVVCLLVKET) are cleaved as a signal peptide. Intrachain disulfides connect Cys28–Cys87, Cys40–Cys100, and Cys86–Cys91. Positions 52-76 (SVSKRAIDFISEQQAKDYMGAMPHI) are cleaved as a propeptide — connecting peptide. The interval 102–114 (PYSTAPATATPVR) is d. Positions 102-305 (PYSTAPATAT…RDSYHLTELR (204 aa)) are cleaved as a propeptide — d/E peptide. The segment covering 107–118 (PATATPVRTTEP) has biased composition (low complexity). Disordered regions lie at residues 107-130 (PATA…PLDG) and 236-305 (HNQT…TELR). The segment at 115-305 (TTEPQPEEAE…RDSYHLTELR (191 aa)) is e. Residues 119–128 (QPEEAEDDPL) show a composition bias toward acidic residues. 2 stretches are compositionally biased toward basic and acidic residues: residues 236-245 (HNQTDKKEPT) and 291-305 (RRIE…TELR).

It belongs to the insulin family.

The protein localises to the secreted. The chain is Insulin-like peptide (ILP) from Branchiostoma californiense (California lancelet).